The primary structure comprises 95 residues: Fluoride-specific ion channel FluC 1 (95 aa).

3 helical membrane passes run 23 to 43 (LIDA…LMGW), 49 to 69 (LWGT…LLMF), and 70 to 90 (DGAY…WLLG). Na(+)-binding residues include Gly-56 and Thr-59.

It belongs to the fluoride channel Fluc/FEX (TC 1.A.43) family.

The protein resides in the cell membrane. It catalyses the reaction fluoride(in) = fluoride(out). Na(+) is not transported, but it plays an essential structural role and its presence is essential for fluoride channel function. Functionally, fluoride-specific ion channel. Important for reducing fluoride concentration in the cell, thus reducing its toxicity. The chain is Fluoride-specific ion channel FluC 1 from Corynebacterium diphtheriae (strain ATCC 700971 / NCTC 13129 / Biotype gravis).